The sequence spans 145 residues: Basic phospholipase A2 PC17 (145 aa).

The first 21 residues, Met1–Ala21, serve as a signal peptide directing secretion. Residues Ile22–Arg27 constitute a propeptide that is removed on maturation. 7 cysteine pairs are disulfide-bonded: Cys38/Cys98, Cys54/Cys144, Cys56/Cys72, Cys71/Cys125, Cys78/Cys118, Cys87/Cys111, and Cys105/Cys116. Ca(2+)-binding residues include Tyr55, Gly57, and Gly59. His75 is a catalytic residue. Position 76 (Asp76) interacts with Ca(2+). The active site involves Asp119.

The protein belongs to the phospholipase A2 family. Group I subfamily. D49 sub-subfamily. Ca(2+) serves as cofactor. In terms of tissue distribution, expressed by the venom gland.

The protein resides in the secreted. The enzyme catalyses a 1,2-diacyl-sn-glycero-3-phosphocholine + H2O = a 1-acyl-sn-glycero-3-phosphocholine + a fatty acid + H(+). In terms of biological role, snake venom phospholipase A2 (PLA2) that inhibits neuromuscular transmission by blocking acetylcholine release from the nerve termini. PLA2 catalyzes the calcium-dependent hydrolysis of the 2-acyl groups in 3-sn-phosphoglycerides. The protein is Basic phospholipase A2 PC17 of Laticauda colubrina (Yellow-lipped sea krait).